Reading from the N-terminus, the 226-residue chain is EEF1A lysine methyltransferase 1 (226 aa).

S2 bears the N-acetylserine mark. S2 carries the post-translational modification Phosphoserine.

The protein belongs to the class I-like SAM-binding methyltransferase superfamily. EFM5 family.

Its subcellular location is the cytoplasm. It catalyses the reaction L-lysyl-[protein] + 3 S-adenosyl-L-methionine = N(6),N(6),N(6)-trimethyl-L-lysyl-[protein] + 3 S-adenosyl-L-homocysteine + 3 H(+). In terms of biological role, protein-lysine methyltransferase that selectively catalyzes the trimethylation of EEF1A at 'Lys-79'. The sequence is that of EEF1A lysine methyltransferase 1 from Bos taurus (Bovine).